The following is a 243-amino-acid chain: Thiocyanate hydrolase subunit gamma (243 aa).

4 residues coordinate Co(3+): C128, C131, S132, and C133. C131 carries the post-translational modification Cysteine sulfinic acid (-SO2H). Residue C133 is modified to Cysteine sulfenic acid (-SOH).

It belongs to the nitrile hydratase subunit alpha family. In terms of assembly, heterododecamer consisting of 4 alpha, 4 beta, and 4 gamma subunits. Co(3+) serves as cofactor.

The enzyme catalyses thiocyanate + H2O + 2 H(+) = carbonyl sulfide + NH4(+). Its pathway is organosulfur degradation; thiocyanate degradation. Its function is as follows. Involved in the degradation of thiocyanate. In Thiobacillus thioparus, this protein is Thiocyanate hydrolase subunit gamma (scnC).